The following is a 902-amino-acid chain: HTH-type transcriptional regulator MalT (902 aa).

39-46 is a binding site for ATP; the sequence is SPAGYGKT. The 66-residue stretch at 832–897 folds into the HTH luxR-type domain; that stretch reads ELVRTSPLTQ…EAVQTAEQLL (66 aa). The H-T-H motif DNA-binding region spans 856–875; sequence NEQIAHELDVAGTTIKTHIR.

It belongs to the MalT family. In terms of assembly, monomer in solution. Oligomerizes to an active state in the presence of the positive effectors ATP and maltotriose.

Activated by ATP and maltotriose, which are both required for DNA binding. Its function is as follows. Positively regulates the transcription of the maltose regulon whose gene products are responsible for uptake and catabolism of malto-oligosaccharides. Specifically binds to the promoter region of its target genes, recognizing a short DNA motif called the MalT box. This Vibrio cholerae serotype O1 (strain ATCC 39315 / El Tor Inaba N16961) protein is HTH-type transcriptional regulator MalT.